A 235-amino-acid polypeptide reads, in one-letter code: Post-translational flagellin modification protein B (235 aa).

The protein belongs to the CMP-NeuNAc synthase family.

Functionally, required for biosynthesis of LAH modification in the post-translational modification of Campylobacter coli flagellin. The sequence is that of Post-translational flagellin modification protein B (ptmB) from Campylobacter coli.